Reading from the N-terminus, the 204-residue chain is Large ribosomal subunit protein bL25 (204 aa).

Belongs to the bacterial ribosomal protein bL25 family. CTC subfamily. In terms of assembly, part of the 50S ribosomal subunit; part of the 5S rRNA/L5/L18/L25 subcomplex. Contacts the 5S rRNA. Binds to the 5S rRNA independently of L5 and L18.

Its function is as follows. This is one of the proteins that binds to the 5S RNA in the ribosome where it forms part of the central protuberance. In Rhizobium etli (strain ATCC 51251 / DSM 11541 / JCM 21823 / NBRC 15573 / CFN 42), this protein is Large ribosomal subunit protein bL25.